The following is a 260-amino-acid chain: MQDDLKNAPIGFFDSGLGGLSVLRKALEMMPNENYIYYGDSKHAPYGEKTPQEIRSLSFNAIEFLIKKGAKAIVIACNTATSAAAHDLREYYKDIPIIGIEPALKPAIKLHETGSVIVMATKATLTQEKFKNLMDKYGEHREVIPLPCPGLVEFIEAGNLEGEEVKNFLREKLNPYMDREISSIVLGCTHYPFVKDVIQDIVGEKVDIIDGSSGTIRELKRRLEENNMQSELKKKGDLDIFNSLEDNKILELSKKLIEIK.

Substrate-binding positions include 14–15 (DS) and 46–47 (YG). Residue cysteine 77 is the Proton donor/acceptor of the active site. Residue 78–79 (NT) participates in substrate binding. Cysteine 188 acts as the Proton donor/acceptor in catalysis. Residue 189-190 (TH) coordinates substrate.

The protein belongs to the aspartate/glutamate racemases family.

It carries out the reaction L-glutamate = D-glutamate. The protein operates within cell wall biogenesis; peptidoglycan biosynthesis. Functionally, provides the (R)-glutamate required for cell wall biosynthesis. The protein is Glutamate racemase of Clostridium perfringens (strain SM101 / Type A).